Consider the following 89-residue polypeptide: Small ribosomal subunit protein uS15 (89 aa).

It belongs to the universal ribosomal protein uS15 family. Part of the 30S ribosomal subunit. Forms a bridge to the 50S subunit in the 70S ribosome, contacting the 23S rRNA.

Functionally, one of the primary rRNA binding proteins, it binds directly to 16S rRNA where it helps nucleate assembly of the platform of the 30S subunit by binding and bridging several RNA helices of the 16S rRNA. Forms an intersubunit bridge (bridge B4) with the 23S rRNA of the 50S subunit in the ribosome. This Sinorhizobium medicae (strain WSM419) (Ensifer medicae) protein is Small ribosomal subunit protein uS15.